The primary structure comprises 123 residues: Small ribosomal subunit protein uS12 (123 aa).

Positions methionine 1–glycine 32 are disordered. Aspartate 89 is subject to 3-methylthioaspartic acid. Residues aspartate 103–lysine 123 form a disordered region. Positions lysine 108–lysine 123 are enriched in basic residues.

The protein belongs to the universal ribosomal protein uS12 family. Part of the 30S ribosomal subunit. Contacts proteins S8 and S17. May interact with IF1 in the 30S initiation complex.

Functionally, with S4 and S5 plays an important role in translational accuracy. Interacts with and stabilizes bases of the 16S rRNA that are involved in tRNA selection in the A site and with the mRNA backbone. Located at the interface of the 30S and 50S subunits, it traverses the body of the 30S subunit contacting proteins on the other side and probably holding the rRNA structure together. The combined cluster of proteins S8, S12 and S17 appears to hold together the shoulder and platform of the 30S subunit. This chain is Small ribosomal subunit protein uS12, found in Cutibacterium acnes (strain DSM 16379 / KPA171202) (Propionibacterium acnes).